The chain runs to 484 residues: Monocarboxylate transporter 2 (484 aa).

At 1 to 16 (MPAPTAVPPPHPLPPD) the chain is on the cytoplasmic side. A helical transmembrane segment spans residues 17–37 (GGWGWVVVGASFISIGFSYAF). Residues 38-60 (PKSVTVFFKDIQEIFRAGHSKVA) are Extracellular-facing. A helical membrane pass occupies residues 61 to 81 (WISSIMLAVMYAGGPISSVLV). Topologically, residues 82 to 87 (NKYGSR) are cytoplasmic. The helical transmembrane segment at 88–108 (PVVVIGGLLCCTGMILASFST) threads the bilayer. At 109–116 (SMIQLYLT) the chain is on the extracellular side. A helical membrane pass occupies residues 117 to 137 (IGFISGLGLAFNLQPALTILG). At 138-144 (KYFYRRR) the chain is on the cytoplasmic side. Residues 145 to 165 (PLASGLAMTGSPVFLSSLAPF) form a helical membrane-spanning segment. The Extracellular portion of the chain corresponds to 166–174 (NQYLFNSYG). The helical transmembrane segment at 175 to 195 (LKGSFLILGGIFLHSCVAGSL) threads the bilayer. The Cytoplasmic segment spans residues 196–245 (MRPVGTSQQSPKSKSKVSSRHDSSTKKAPKLTLAQRINMFLDFSLFKHRG). The tract at residues 198-223 (PVGTSQQSPKSKSKVSSRHDSSTKKA) is disordered. Residues 246 to 266 (FLIYLSGNVIMFLGFFAPVIF) form a helical membrane-spanning segment. The Extracellular portion of the chain corresponds to 267–281 (LSPYAKNRGVDDYKA). A helical membrane pass occupies residues 282–302 (AYLLSVMAFVDMFSRPCGGLI). Residues 303–311 (ANTRLVRPR) are Cytoplasmic-facing. Residues 312 to 332 (IQYFFSLAIVFTGVCHLLCPL) form a helical membrane-spanning segment. The Extracellular portion of the chain corresponds to 333–337 (AESYT). A helical transmembrane segment spans residues 338-358 (ALVVYAIFFGYGFGSVSSILF). Topologically, residues 359-372 (ETLMDLVGPARFSS) are cytoplasmic. The helical transmembrane segment at 373–393 (AVGLVTIVECCPVLLGPPLAG) threads the bilayer. Residues 394–405 (KLVDETGEHKYL) lie on the Extracellular side of the membrane. Residues 406–426 (FVASGAIVVLAGIWLFIGNAI) form a helical membrane-spanning segment. At 427 to 484 (NYRLLAKERKREKARKKKSPNRHSKELESLSKSNQDDVAVRVPQAHRSPSDKERESNI) the chain is on the cytoplasmic side. Residues 437 to 484 (REKARKKKSPNRHSKELESLSKSNQDDVAVRVPQAHRSPSDKERESNI) are disordered. A compositionally biased stretch (basic residues) spans 438–448 (EKARKKKSPNR). Basic and acidic residues-rich tracts occupy residues 449–465 (HSKE…DDVA) and 474–484 (SPSDKERESNI).

Belongs to the major facilitator superfamily. Monocarboxylate porter (TC 2.A.1.13) family. As to quaternary structure, homodimer. Interacts with GRID2IP. Interacts with EMB; interaction mediates SLC16A7 targeting to the plasma membrane. Interacts with isoform 2 of BSG.

Its subcellular location is the cell membrane. It is found in the basolateral cell membrane. The protein localises to the cytoplasm. It catalyses the reaction 3-methyl-2-oxobutanoate(out) + H(+)(out) = 3-methyl-2-oxobutanoate(in) + H(+)(in). The enzyme catalyses (S)-lactate(in) + H(+)(in) = (S)-lactate(out) + H(+)(out). It carries out the reaction acetoacetate(out) + H(+)(out) = acetoacetate(in) + H(+)(in). The catalysed reaction is (R)-3-hydroxybutanoate(out) + H(+)(out) = (R)-3-hydroxybutanoate(in) + H(+)(in). It catalyses the reaction 4-methyl-2-oxopentanoate(out) + H(+)(out) = 4-methyl-2-oxopentanoate(in) + H(+)(in). The enzyme catalyses pyruvate(out) + H(+)(out) = pyruvate(in) + H(+)(in). It carries out the reaction (S)-3-hydroxybutanoate(out) + H(+)(out) = (S)-3-hydroxybutanoate(in) + H(+)(in). With respect to regulation, transport activity exhibits steep dependence on substrate concentration. Substrate concentration sensitivity of SLC16A7 arises from the strong inter-subunit cooperativity of the SLC16A7 dimer during transport. Inhibited by AR-C155858. Functionally, proton-coupled monocarboxylate symporter. Catalyzes the rapid transport across the plasma membrane of monocarboxylates such as L-lactate, pyruvate and ketone bodies, acetoacetate, beta-hydroxybutyrate and acetate. Dimerization is functionally required and both subunits work cooperatively in transporting substrate. The sequence is that of Monocarboxylate transporter 2 (SLC16A7) from Meriones unguiculatus (Mongolian jird).